We begin with the raw amino-acid sequence, 168 residues long: GTP-dependent dephospho-CoA kinase (168 aa).

Residues D49, I50, V51, D68, K70, and E120 each coordinate GTP.

The protein belongs to the GTP-dependent DPCK family.

It carries out the reaction 3'-dephospho-CoA + GTP = GDP + CoA + H(+). It participates in cofactor biosynthesis; coenzyme A biosynthesis. Functionally, catalyzes the GTP-dependent phosphorylation of the 3'-hydroxyl group of dephosphocoenzyme A to form coenzyme A (CoA). The sequence is that of GTP-dependent dephospho-CoA kinase from Pyrobaculum islandicum (strain DSM 4184 / JCM 9189 / GEO3).